The following is a 305-amino-acid chain: Glutaminase (305 aa).

Positions 61, 113, 158, 165, 189, 241, and 259 each coordinate substrate.

Belongs to the glutaminase family. As to quaternary structure, homotetramer.

It carries out the reaction L-glutamine + H2O = L-glutamate + NH4(+). In Clostridium botulinum (strain 657 / Type Ba4), this protein is Glutaminase.